Reading from the N-terminus, the 400-residue chain is Phosphoglycerate kinase (400 aa).

Residues 22 to 24 (DFN), R38, 61 to 64 (HLGR), R119, and R152 contribute to the substrate site. Residues K205, G296, E327, and 353 to 356 (GGDT) contribute to the ATP site.

This sequence belongs to the phosphoglycerate kinase family. As to quaternary structure, monomer.

The protein resides in the cytoplasm. It carries out the reaction (2R)-3-phosphoglycerate + ATP = (2R)-3-phospho-glyceroyl phosphate + ADP. Its pathway is carbohydrate degradation; glycolysis; pyruvate from D-glyceraldehyde 3-phosphate: step 2/5. The sequence is that of Phosphoglycerate kinase from Campylobacter lari (strain RM2100 / D67 / ATCC BAA-1060).